The chain runs to 209 residues: 2-phospho-L-lactate guanylyltransferase (209 aa).

The protein belongs to the CofC family. In terms of assembly, homodimer.

The catalysed reaction is (2S)-2-phospholactate + GTP + H(+) = (2S)-lactyl-2-diphospho-5'-guanosine + diphosphate. It participates in cofactor biosynthesis; coenzyme F420 biosynthesis. Guanylyltransferase that catalyzes the activation of (2S)-2-phospholactate (2-PL) as (2S)-lactyl-2-diphospho-5'-guanosine, via the condensation of 2-PL with GTP. It is involved in the biosynthesis of coenzyme F420, a hydride carrier cofactor. The protein is 2-phospho-L-lactate guanylyltransferase of Halobacterium salinarum (strain ATCC 29341 / DSM 671 / R1).